The following is a 1061-amino-acid chain: Translation initiation factor IF-2 (1061 aa).

Disordered stretches follow at residues 51 to 199 (FARG…VAVK) and 250 to 460 (AFQA…IPTE). The segment covering 67–77 (NEPKPKIDWSR) has biased composition (basic and acidic residues). Low complexity-rich tracts occupy residues 97-113 (VAAA…KAPV), 120-130 (RPSAPRPAVTA), 167-177 (VPQPRQPSAVV), 184-199 (TPAI…VAVK), and 250-278 (AFQA…AEAP). Over residues 279–291 (PVAPEKPAVPAPP) the composition is skewed to pro residues. Over residues 340-360 (SPGGPGGPGGGYGQRPSGPGG) the composition is skewed to gly residues. A compositionally biased stretch (low complexity) spans 381 to 391 (GFNNGPRPGFG). Gly residues predominate over residues 392 to 405 (QRPGGFGQRPGMGA). The 177-residue stretch at 552–728 (SRPPVVTVMG…CLVADLGNLK (177 aa)) folds into the tr-type G domain. The tract at residues 561–568 (GHVDHGKT) is G1. 561–568 (GHVDHGKT) contributes to the GTP binding site. The tract at residues 586–590 (GITQH) is G2. The interval 614–617 (DTPG) is G3. GTP is bound by residues 614–618 (DTPGH) and 668–671 (NKID). Residues 668 to 671 (NKID) are G4. The tract at residues 704-706 (SAK) is G5.

It belongs to the TRAFAC class translation factor GTPase superfamily. Classic translation factor GTPase family. IF-2 subfamily.

It is found in the cytoplasm. Its function is as follows. One of the essential components for the initiation of protein synthesis. Protects formylmethionyl-tRNA from spontaneous hydrolysis and promotes its binding to the 30S ribosomal subunits. Also involved in the hydrolysis of GTP during the formation of the 70S ribosomal complex. In Acidobacterium capsulatum (strain ATCC 51196 / DSM 11244 / BCRC 80197 / JCM 7670 / NBRC 15755 / NCIMB 13165 / 161), this protein is Translation initiation factor IF-2.